The sequence spans 217 residues: Uracil-DNA glycosylase (217 aa).

Residue Asp-62 is the Proton acceptor of the active site.

It belongs to the uracil-DNA glycosylase (UDG) superfamily. UNG family.

The protein localises to the cytoplasm. The enzyme catalyses Hydrolyzes single-stranded DNA or mismatched double-stranded DNA and polynucleotides, releasing free uracil.. Excises uracil residues from the DNA which can arise as a result of misincorporation of dUMP residues by DNA polymerase or due to deamination of cytosine. The protein is Uracil-DNA glycosylase of Streptococcus uberis (strain ATCC BAA-854 / 0140J).